The chain runs to 44 residues: Pandinin-1 (44 aa).

As to expression, expressed by the venom gland.

It is found in the secreted. Its subcellular location is the target cell membrane. Functionally, disrupts cell membranes through formation of pores. Strong antimicrobial activity against Gram-positive bacteria B.subtilis, S.epidermidis, E.faecalis and S.aureus. Less active against Gram-negative bacteria P.aeruginosa and E.coli. Has no antifungal or hemolytic activity. The protein is Pandinin-1 of Pandinus imperator (Emperor scorpion).